Reading from the N-terminus, the 105-residue chain is Malonate decarboxylase acyl carrier protein (105 aa).

Position 28 is an O-(phosphoribosyl dephospho-coenzyme A)serine (Ser28).

Belongs to the MdcC family. Post-translationally, covalently binds the prosthetic group of malonate decarboxylase.

It localises to the cytoplasm. In terms of biological role, subunit of malonate decarboxylase, it is an acyl carrier protein to which acetyl and malonyl thioester residues are bound via a 2'-(5''-phosphoribosyl)-3'-dephospho-CoA prosthetic group and turn over during the catalytic mechanism. The sequence is that of Malonate decarboxylase acyl carrier protein from Bradyrhizobium diazoefficiens (strain JCM 10833 / BCRC 13528 / IAM 13628 / NBRC 14792 / USDA 110).